Reading from the N-terminus, the 619-residue chain is Adagio protein 3 (619 aa).

One can recognise a PAS domain in the interval V44–G123. C91 is modified (S-4a-FMN cysteine). In terms of domain architecture, PAC spans Q127–T168. In terms of domain architecture, F-box spans I211–Q257. 5 Kelch repeats span residues S304–P354, R357–T404, R409–W457, R462–A513, and R523–G571.

Belongs to the ADAGIO family. In terms of assembly, interacts with ADO1 (via Kelch repeats), ADO2 (via Kelch repeats), SKP1A/ASK1, SKP1B/ASK2, ASK3, SKP1K/ASK11, ASK12, ASK13 and SKP1N/ASK14. Interacts (via Kelch repeats) with CDF1, CDF2 and CDF3. Interacts (via N-terminus) with CO and GI (via N-terminus) in a blue-light-dependent manner. FMN binds covalently to cysteine after exposure to blue light and is reversed in the dark. As to expression, highly expressed in stomata and leaves and to a lower extent in seeds, roots, rosettes, stems and siliques. Also present in sepals and anther filaments.

The protein localises to the nucleus. Its subcellular location is the cytoplasm. It participates in protein modification; protein ubiquitination. Its function is as follows. Component of an E3 ubiquitin ligase complex that plays a central role in blue light-dependent circadian cycles. Acts as a blue light photoreceptor, due to the presence of FMN, that mediates light-regulated protein degradation of critical clock components by targeting them to the proteasome complex. The SCF(ADO3) E3 ubiquitin ligase complex is involved in the regulation of circadian clock-dependent processes including transition to flowering time, hypocotyl elongation, cotyledons and leaf movement rhythms. Forms a complex with 'GIGANTEA' (GI) to regulate 'CONSTANS' (CO) expression. Promotes CO expression during the light period of long days by decreasing the stability of CDF1 and CDF2 and by interacting directly with the CO protein and stabilizing it. ADO3 function is mainly GI dependent. Does not act as a regulator of CDF1 transcription. The interactions of ADO1/ZTL and ADO2 with ADO3 prevent its interaction with CDF1. This is Adagio protein 3 (ADO3) from Arabidopsis thaliana (Mouse-ear cress).